The following is a 178-amino-acid chain: MESPVELLAALPALVTALALLLAWLLLRRGAARVPAPESTASDEAPGAPAPPEPPESCAPEPAPEGPSQSERVAEPEESEAEEPAAEGRQDEDSDSEMGPPTEEPEEEDGAAFSFKYSPGQLRGSQYKKMMTKEELEEEHRVQKEQLAAIFKLMKDNKDTFGEMSDGDMQEQLRLYDM.

The helical transmembrane segment at 7-27 (LLAALPALVTALALLLAWLLL) threads the bilayer. The interval 33–121 (RVPAPESTAS…AFSFKYSPGQ (89 aa)) is disordered. Positions 48-65 (APAPPEPPESCAPEPAPE) are enriched in pro residues. The segment covering 76–85 (PEESEAEEPA) has biased composition (acidic residues). 2 positions are modified to phosphoserine: Ser79 and Ser165.

It localises to the membrane. The sequence is that of Matrix-remodeling-associated protein 7 (Mxra7) from Mus musculus (Mouse).